The following is a 630-amino-acid chain: Glutathione hydrolase proenzyme 1 (630 aa).

The Cytoplasmic segment spans residues 1-49 (MGINTSSAQSSGAASIARSSVNVKSGNRHLSSNKKSATSALEERASRPS). A helical; Signal-anchor for type II membrane protein membrane pass occupies residues 50 to 70 (ILVTFLVLAGTILSLYIWPIL). At 71–630 (SPDLFFANQR…SRKQAVAAAY (560 aa)) the chain is on the lumenal side. N-linked (GlcNAc...) asparagine glycosylation occurs at Asn-156. An L-glutamate-binding site is contributed by Arg-165. Residues Asn-180, Asn-315, Asn-397, and Asn-417 are each glycosylated (N-linked (GlcNAc...) asparagine). Thr-441 acts as the Nucleophile in catalysis. L-glutamate is bound by residues Ser-459, Asn-461, Asp-483, 511-512 (SS), and 532-533 (GG). The N-linked (GlcNAc...) asparagine glycan is linked to Asn-612.

It belongs to the gamma-glutamyltransferase family. Heterodimer composed of the light and heavy chains. The active site is located in the light chain. Post-translationally, cleaved by autocatalysis into a large and a small subunit.

The protein localises to the endoplasmic reticulum membrane. The enzyme catalyses an N-terminal (5-L-glutamyl)-[peptide] + an alpha-amino acid = 5-L-glutamyl amino acid + an N-terminal L-alpha-aminoacyl-[peptide]. The catalysed reaction is glutathione + H2O = L-cysteinylglycine + L-glutamate. It carries out the reaction an S-substituted glutathione + H2O = an S-substituted L-cysteinylglycine + L-glutamate. It functions in the pathway sulfur metabolism; glutathione metabolism. Functionally, catalyzes the transfer of the gamma-glutamyl moiety of glutathione (GSH) and other gamma-glutamyl compounds to amino acids and peptides. Major GSH-degrading enzyme, catalyzing the hydrolytic release of L-glutamate from GSH. The protein is Glutathione hydrolase proenzyme 1 (ggt1) of Schizosaccharomyces pombe (strain 972 / ATCC 24843) (Fission yeast).